Consider the following 86-residue polypeptide: Muscarinic toxin 2 (86 aa).

The signal sequence occupies residues 1 to 21 (MKTLLLTLVVVTIVCLDLGYT). 4 disulfide bridges follow: cysteine 24/cysteine 45, cysteine 38/cysteine 63, cysteine 67/cysteine 78, and cysteine 79/cysteine 84.

This sequence belongs to the three-finger toxin family. Short-chain subfamily. Aminergic toxin sub-subfamily. In terms of assembly, monomer. In terms of tissue distribution, expressed by the venom gland.

The protein resides in the secreted. Binds irreversibly to M1 (CHRM1) muscarinic acetylcholine receptors, and reveals a slightly weaker effect on M3 (CHRM3) receptors. The mechanism of toxin-receptor interaction comprises at least two steps. The first step is fast with no competition between the toxin and the antagonist. The second step is slow with formation of a more stable toxin-receptor complex and inhibition of the antagonist binding. This is Muscarinic toxin 2 from Dendroaspis angusticeps (Eastern green mamba).